We begin with the raw amino-acid sequence, 400 residues long: Enoyl-[acyl-carrier-protein] reductase [NADH] (400 aa).

Residues 48–53 (GSSSGY), 74–75 (FE), 111–112 (DA), and 139–140 (LA) contribute to the NAD(+) site. Position 225 (Tyr-225) interacts with substrate. Residue Tyr-235 is the Proton donor of the active site. Residues Lys-244 and 273-275 (VVT) contribute to the NAD(+) site.

It belongs to the TER reductase family. In terms of assembly, monomer.

The catalysed reaction is a 2,3-saturated acyl-[ACP] + NAD(+) = a (2E)-enoyl-[ACP] + NADH + H(+). It functions in the pathway lipid metabolism; fatty acid biosynthesis. Its function is as follows. Involved in the final reduction of the elongation cycle of fatty acid synthesis (FAS II). Catalyzes the reduction of a carbon-carbon double bond in an enoyl moiety that is covalently linked to an acyl carrier protein (ACP). In Shewanella loihica (strain ATCC BAA-1088 / PV-4), this protein is Enoyl-[acyl-carrier-protein] reductase [NADH].